A 394-amino-acid polypeptide reads, in one-letter code: Ceramide glucosyltransferase-A (394 aa).

Topologically, residues 1 to 10 (MAVLDLALQG) are lumenal. The chain crosses the membrane as a helical span at residues 11-32 (LAIFGCVLFFVLWFMHFLSIVY). Residues 33 to 195 (TRLHLNKKIS…QVYFGTSHPR (163 aa)) are Cytoplasmic-facing. Position 92 (D92) is a short sequence motif, D1. Residue D144 is a short sequence motif, D2. Residues 196-215 (SYISANVTGFKCVTGMSCLM) traverse the membrane as a helical segment. Topologically, residues 216 to 287 (RKEVLDQAGG…KLRINMLPAT (72 aa)) are lumenal. D236 is a short sequence motif (D3). D236 serves as the catalytic Proton acceptor. The (Q/R)XXRW motif lies at 272-276 (RMIRW). Residues 288-304 (IICEPISECFVASLIIG) traverse the membrane as a helical segment. The Cytoplasmic portion of the chain corresponds to 305–309 (WAAHH). A helical transmembrane segment spans residues 310-328 (IFRWDIMVFFMCHCLAWFI). Residues 329–348 (FDYIQLRGVQGGPLNFSKLD) are Lumenal-facing. Residues 349–369 (YAVAWFIRESMTIYIFLSALW) traverse the membrane as a helical segment. The Cytoplasmic segment spans residues 370-394 (DPTISWRTGRFRLRCGGTAEEILDV).

It belongs to the glycosyltransferase 2 family. As to expression, at the late gastrula stage, weakly expressed ubiquitously. As neurulation proceeds (stages 15-16), expression moves towards the dorsal structures: involuted paraxial mesoderm and neural folds. In the tailbud embryo (stage 28), expression is restricted to the notochord. At later stages (stage 35), expression remains in the notochord and also appears weakly in the cephalic region.

Its subcellular location is the golgi apparatus membrane. It carries out the reaction an N-acylsphing-4-enine + UDP-alpha-D-glucose = a beta-D-glucosyl-(1&lt;-&gt;1')-N-acylsphing-4-enine + UDP + H(+). The enzyme catalyses UDP-alpha-D-xylose + an N-acylsphing-4-enine = a beta-D-xylosyl-(1&lt;-&gt;1')-N-acylsphing-4-enine + UDP + H(+). The catalysed reaction is N-(9Z-octadecenoyl)-sphing-4-enine + UDP-alpha-D-xylose = beta-D-xylosyl-(1&lt;-&gt;1')-N-(9Z-octadecenoyl)-sphing-4-enine + UDP + H(+). Its pathway is lipid metabolism; sphingolipid metabolism. In terms of biological role, participates in the initial step of the glucosylceramide-based glycosphingolipid/GSL synthetic pathway at the cytosolic surface of the Golgi. Catalyzes the transfer of glucose from UDP-glucose to ceramide to produce glucosylceramide/GlcCer (such as beta-D-glucosyl-(1&lt;-&gt;1')-N-acylsphing-4-enine). Glucosylceramide is the core component of glycosphingolipids/GSLs, amphipathic molecules consisting of a ceramide lipid moiety embedded in the outer leaflet of the membrane, linked to one of hundreds of different externally oriented oligosaccharide structures. Glycosphingolipids are essential components of membrane microdomains that mediate membrane trafficking and signal transduction. They are implicated in many fundamental cellular processes, including growth, differentiation, migration, morphogenesis, cell-to-cell and cell-to-matrix interactions. Glycosphingolipids are required for convergence extension movements during early development. Catalyzes the synthesis of xylosylceramide/XylCer (such as beta-D-xylosyl-(1&lt;-&gt;1')-N-acylsphing-4-enine) using UDP-Xyl as xylose donor. This chain is Ceramide glucosyltransferase-A (ugcg-a), found in Xenopus laevis (African clawed frog).